Reading from the N-terminus, the 281-residue chain is Cytochrome bc1 complex cytochrome c subunit (281 aa).

A helical membrane pass occupies residues 17 to 37 (AAGAMALAVGLTGAGILVNAV). Cytochrome c domains follow at residues 52-132 (ALIQ…EANG) and 162-240 (ADVA…KSAK). The heme c site is built by C65, C68, H69, C175, C178, and H179. The helical transmembrane segment at 259-279 (GMMMWLVGIVVLVAAAMWIGS) threads the bilayer.

The cytochrome bc1 complex is composed of a cytochrome b (QcrB), the Rieske iron-sulfur protein (QcrA) and a diheme cytochrome c (QcrC) subunit. The bc1 complex forms a supercomplex with cytochrome c oxidase (cytochrome aa3). Binds 2 heme c groups covalently per subunit.

Its subcellular location is the cell membrane. The enzyme catalyses a quinol + 2 Fe(III)-[cytochrome c](out) = a quinone + 2 Fe(II)-[cytochrome c](out) + 2 H(+)(out). Cytochrome c1 subunit of the cytochrome bc1 complex, an essential component of the respiratory electron transport chain required for ATP synthesis. The bc1 complex catalyzes the oxidation of menaquinol and the reduction of cytochrome c in the respiratory chain. The bc1 complex operates through a Q-cycle mechanism that couples electron transfer to generation of the proton gradient that drives ATP synthesis. The sequence is that of Cytochrome bc1 complex cytochrome c subunit (qcrC) from Corynebacterium diphtheriae (strain ATCC 700971 / NCTC 13129 / Biotype gravis).